The sequence spans 441 residues: uncharacterized protein (441 aa).

Helical transmembrane passes span 62 to 82 (FLSL…FEIG), 88 to 108 (LILT…KLFG), 112 to 132 (IALT…IIAL), 154 to 174 (ALLH…LLVV), 192 to 212 (WMFF…YLLY), 224 to 244 (ALMI…GVAS), 247 to 267 (ANLS…YMVC), 312 to 332 (IVLF…ATFA), 335 to 355 (ISVM…IIFL), 363 to 383 (QGMW…NLLL), and 399 to 419 (ILCS…LLYA).

The protein resides in the membrane. This is an uncharacterized protein from Schizosaccharomyces pombe (strain 972 / ATCC 24843) (Fission yeast).